The primary structure comprises 492 residues: Cytochrome P450 2A2 (492 aa).

Cys-437 contributes to the heme binding site.

The protein belongs to the cytochrome P450 family. Heme is required as a cofactor. In terms of tissue distribution, liver specific.

The protein localises to the endoplasmic reticulum membrane. It localises to the microsome membrane. It catalyses the reaction an organic molecule + reduced [NADPH--hemoprotein reductase] + O2 = an alcohol + oxidized [NADPH--hemoprotein reductase] + H2O + H(+). Functionally, highly active in the 15-alpha-hydroxylation of testosterone. In Rattus norvegicus (Rat), this protein is Cytochrome P450 2A2 (Cyp2a2).